The following is a 122-amino-acid chain: UPF0102 protein cgR_1859 (122 aa).

This sequence belongs to the UPF0102 family.

The protein is UPF0102 protein cgR_1859 of Corynebacterium glutamicum (strain R).